The primary structure comprises 384 residues: S-adenosylmethionine synthase (384 aa).

His15 is a binding site for ATP. Position 17 (Asp17) interacts with Mg(2+). K(+) is bound at residue Glu43. L-methionine-binding residues include Glu56 and Gln99. Residues 99 to 109 (QSPDINQGVDR) are flexible loop. Residues 164-166 (DAK), 230-231 (RF), Asp239, 245-246 (RK), Ala262, and Lys266 each bind ATP. Asp239 is an L-methionine binding site. An L-methionine-binding site is contributed by Lys270.

It belongs to the AdoMet synthase family. In terms of assembly, homotetramer; dimer of dimers. The cofactor is Mg(2+). Requires K(+) as cofactor.

The protein localises to the cytoplasm. The enzyme catalyses L-methionine + ATP + H2O = S-adenosyl-L-methionine + phosphate + diphosphate. Its pathway is amino-acid biosynthesis; S-adenosyl-L-methionine biosynthesis; S-adenosyl-L-methionine from L-methionine: step 1/1. Its function is as follows. Catalyzes the formation of S-adenosylmethionine (AdoMet) from methionine and ATP. The overall synthetic reaction is composed of two sequential steps, AdoMet formation and the subsequent tripolyphosphate hydrolysis which occurs prior to release of AdoMet from the enzyme. This is S-adenosylmethionine synthase from Edwardsiella ictaluri (strain 93-146).